The sequence spans 415 residues: Gamma-glutamyl phosphate reductase (415 aa).

Belongs to the gamma-glutamyl phosphate reductase family.

The protein resides in the cytoplasm. It catalyses the reaction L-glutamate 5-semialdehyde + phosphate + NADP(+) = L-glutamyl 5-phosphate + NADPH + H(+). Its pathway is amino-acid biosynthesis; L-proline biosynthesis; L-glutamate 5-semialdehyde from L-glutamate: step 2/2. In terms of biological role, catalyzes the NADPH-dependent reduction of L-glutamate 5-phosphate into L-glutamate 5-semialdehyde and phosphate. The product spontaneously undergoes cyclization to form 1-pyrroline-5-carboxylate. This chain is Gamma-glutamyl phosphate reductase, found in Ligilactobacillus salivarius (strain UCC118) (Lactobacillus salivarius).